We begin with the raw amino-acid sequence, 154 residues long: Ubiquitin-like protein 4A-A (154 aa).

In terms of domain architecture, Ubiquitin-like spans 1-76 (MILTVKPLQG…LNLVVRPAGE (76 aa)).

As to quaternary structure, component of the BAT3 complex.

Its subcellular location is the cytoplasm. The protein localises to the cytosol. Component of the BAT3 complex, a multiprotein complex involved in the post-translational delivery of tail-anchored (TA) membrane proteins to the endoplasmic reticulum membrane. TA membrane proteins, also named type II transmembrane proteins, contain a single C-terminal transmembrane region. The protein is Ubiquitin-like protein 4A-A (ubl4aa) of Oncorhynchus mykiss (Rainbow trout).